Here is a 126-residue protein sequence, read N- to C-terminus: Iron-sulfur cluster insertion protein ErpA (126 aa).

The disordered stretch occupies residues 1 to 21; it reads MNQPANQFNPSSSQPVDPTVL. Cys54, Cys118, and Cys120 together coordinate iron-sulfur cluster.

The protein belongs to the HesB/IscA family. As to quaternary structure, homodimer. Requires iron-sulfur cluster as cofactor.

Required for insertion of 4Fe-4S clusters for at least IspG. This Psychrobacter arcticus (strain DSM 17307 / VKM B-2377 / 273-4) protein is Iron-sulfur cluster insertion protein ErpA.